The primary structure comprises 164 residues: Replication restart protein DnaT (164 aa).

Belongs to the DnaT family. As to quaternary structure, homooligomerizes. Interacts with PriB. Component of the replication restart primosome. Primosome assembly occurs via a 'hand-off' mechanism. PriA binds to replication forks, subsequently PriB then DnaT bind; DnaT then displaces ssDNA to generate the helicase loading substrate.

Its function is as follows. Involved in the restart of stalled replication forks, which reloads the replicative helicase on sites other than the origin of replication. Can function in multiple replication restart pathways. Displaces ssDNA from a PriB-ssDNA complex. Probably forms a spiral filament on ssDNA. The polypeptide is Replication restart protein DnaT (Buchnera aphidicola subsp. Acyrthosiphon pisum (strain 5A)).